The primary structure comprises 472 residues: 3-isopropylmalate dehydratase large subunit (472 aa).

The interval 61-80 (TPDHNVPTTQKERASGVEGI) is disordered. [4Fe-4S] cluster contacts are provided by C353, C414, and C417.

The protein belongs to the aconitase/IPM isomerase family. LeuC type 1 subfamily. Heterodimer of LeuC and LeuD. [4Fe-4S] cluster is required as a cofactor.

It catalyses the reaction (2R,3S)-3-isopropylmalate = (2S)-2-isopropylmalate. Its pathway is amino-acid biosynthesis; L-leucine biosynthesis; L-leucine from 3-methyl-2-oxobutanoate: step 2/4. Catalyzes the isomerization between 2-isopropylmalate and 3-isopropylmalate, via the formation of 2-isopropylmaleate. The chain is 3-isopropylmalate dehydratase large subunit from Saccharophagus degradans (strain 2-40 / ATCC 43961 / DSM 17024).